The primary structure comprises 362 residues: MSKRAYNFNAGPAALPLEVLERAQAEFVDYQHTGMSIMEMSHRGAVYEAVHNEAQARLLALLGNPTGYKVLFIQGGASTQFAMIPMNFLKEGQTANYVMTGSWASKALKEAKLIGDTHVAASSEASNYMTLPKLQEIQLQDNAAYLHLTSNETIEGAQFKAFPDTGSVPLIGDMSSDILSRPFDLNQFGLVYAGAQKNLGPSGVTVVIVREDLVAESPKHLPTMLRYDTYVKNNSLYNTPPSFGIYMVNEVLKWIEERGGLEGVQQANRKKASLIYDAIDQSGGFYRGCVDVDSRSDMNITFRLASEELEKEFVKASEQEGFVGLKGHRSVGGLRASIYNAVPYESCEALVQFMEHFKRSRG.

Arginine 43 is an L-glutamate binding site. Pyridoxal 5'-phosphate-binding positions include 77–78, tryptophan 103, threonine 153, aspartate 173, and glutamine 196; that span reads AS. Position 197 is an N6-(pyridoxal phosphate)lysine (lysine 197). Position 238-239 (238-239) interacts with pyridoxal 5'-phosphate; it reads NT.

Belongs to the class-V pyridoxal-phosphate-dependent aminotransferase family. SerC subfamily. In terms of assembly, homodimer. It depends on pyridoxal 5'-phosphate as a cofactor.

The protein resides in the cytoplasm. It catalyses the reaction O-phospho-L-serine + 2-oxoglutarate = 3-phosphooxypyruvate + L-glutamate. It carries out the reaction 4-(phosphooxy)-L-threonine + 2-oxoglutarate = (R)-3-hydroxy-2-oxo-4-phosphooxybutanoate + L-glutamate. It functions in the pathway amino-acid biosynthesis; L-serine biosynthesis; L-serine from 3-phospho-D-glycerate: step 2/3. The protein operates within cofactor biosynthesis; pyridoxine 5'-phosphate biosynthesis; pyridoxine 5'-phosphate from D-erythrose 4-phosphate: step 3/5. Catalyzes the reversible conversion of 3-phosphohydroxypyruvate to phosphoserine and of 3-hydroxy-2-oxo-4-phosphonooxybutanoate to phosphohydroxythreonine. This is Phosphoserine aminotransferase (serC) from Niallia circulans (Bacillus circulans).